Consider the following 299-residue polypeptide: 4-diphosphocytidyl-2-C-methyl-D-erythritol kinase (299 aa).

Residue Lys-22 is part of the active site. 108–118 (PVGAGLGGGSS) contacts ATP. The active site involves Asp-150.

The protein belongs to the GHMP kinase family. IspE subfamily.

It carries out the reaction 4-CDP-2-C-methyl-D-erythritol + ATP = 4-CDP-2-C-methyl-D-erythritol 2-phosphate + ADP + H(+). The protein operates within isoprenoid biosynthesis; isopentenyl diphosphate biosynthesis via DXP pathway; isopentenyl diphosphate from 1-deoxy-D-xylulose 5-phosphate: step 3/6. Catalyzes the phosphorylation of the position 2 hydroxy group of 4-diphosphocytidyl-2C-methyl-D-erythritol. This is 4-diphosphocytidyl-2-C-methyl-D-erythritol kinase from Desulfotalea psychrophila (strain LSv54 / DSM 12343).